The chain runs to 496 residues: NADH-ubiquinone oxidoreductase 51 kDa subunit, mitochondrial (496 aa).

Residues 1 to 30 (MISRAAAPSSSIASLSSRSLRAQAPAARSF) constitute a mitochondrion transit peptide. 98–107 (GRGGAGFPSG) is a binding site for NAD(+). 214 to 261 (GMGAYVCGEETSLIESIEGKAGKPRLKPPFPAAVGLFGCPSTVTNVET) provides a ligand contact to FMN. Positions 393, 396, 399, and 439 each coordinate [4Fe-4S] cluster.

It belongs to the complex I 51 kDa subunit family. In terms of assembly, complex I is composed of about 40 different subunits. This is a component of the flavoprotein-sulfur (FP) fragment of the enzyme. FMN serves as cofactor. Requires [4Fe-4S] cluster as cofactor.

It localises to the mitochondrion inner membrane. It carries out the reaction a ubiquinone + NADH + 5 H(+)(in) = a ubiquinol + NAD(+) + 4 H(+)(out). Its function is as follows. Core subunit of the mitochondrial membrane respiratory chain NADH dehydrogenase (Complex I) that is believed to belong to the minimal assembly required for catalysis. Complex I functions in the transfer of electrons from NADH to the respiratory chain. The immediate electron acceptor for the enzyme is believed to be ubiquinone. This is NADH-ubiquinone oxidoreductase 51 kDa subunit, mitochondrial (NUO51) from Aspergillus niger.